Consider the following 239-residue polypeptide: Cysteine-rich venom protein natrin-1 (239 aa).

The signal sequence occupies residues 1 to 18; sequence MIAFSLLCFAAVLQQSFG. The SCP domain maps to 37–165; sequence VDLHNSLRRR…AWSYFYVCQY (129 aa). 8 disulfide bridges follow: Cys-74/Cys-152, Cys-91/Cys-166, Cys-147/Cys-163, Cys-185/Cys-192, Cys-188/Cys-197, Cys-201/Cys-234, Cys-210/Cys-228, and Cys-219/Cys-232. The region spanning 201–234 is the ShKT domain; sequence CTIYNKLTNCDSLLKQSSCQDDWIKSNCPASCFC.

In terms of tissue distribution, expressed by the venom gland.

It is found in the secreted. In terms of biological role, inhibits calcium-activated potassium channels (KCa1.1/KCNMA1), voltage-gated potassium channel Kv1.3/KCNA3, and the calcium release channel/ryanodine receptor (RyR). Binds specifically to type 1 RyR (RyR1) from skeletal muscle. Inhibit both the binding of ryanodine to RyR1, and RyR1's calcium-channel activity. Inhibits carbachol-induced muscle contraction and weakly blocks muscle contraction evoked by potassium. The sequence is that of Cysteine-rich venom protein natrin-1 from Naja atra (Chinese cobra).